The sequence spans 248 residues: Small ribosomal subunit protein uS2 (248 aa).

It belongs to the universal ribosomal protein uS2 family.

The sequence is that of Small ribosomal subunit protein uS2 from Leptothrix cholodnii (strain ATCC 51168 / LMG 8142 / SP-6) (Leptothrix discophora (strain SP-6)).